The following is a 128-amino-acid chain: Small ribosomal subunit protein uS11 (128 aa).

The protein belongs to the universal ribosomal protein uS11 family. Part of the 30S ribosomal subunit. Interacts with proteins S7 and S18. Binds to IF-3.

Functionally, located on the platform of the 30S subunit, it bridges several disparate RNA helices of the 16S rRNA. Forms part of the Shine-Dalgarno cleft in the 70S ribosome. In Wolbachia sp. subsp. Drosophila simulans (strain wRi), this protein is Small ribosomal subunit protein uS11.